We begin with the raw amino-acid sequence, 151 residues long: MAELASIIRPTKTPGRTSGRSTPGAAHLPPPLSTGLSDLLMLLQSPQKPGSGRARRRTVCRPRRSGPDGDFRPSSRRRTPRTRTSDTSRRRRTPAAPTRRTVCRRRPSSSSNTSSGTATSGESSEADWRDSSSASDDDRIPSSKTTTLKAR.

The tract at residues 1 to 151 is disordered; it reads MAELASIIRP…SSKTTTLKAR (151 aa). Residues 33–45 are compositionally biased toward low complexity; it reads STGLSDLLMLLQS. Over residues 53–64 the composition is skewed to basic residues; sequence RARRRTVCRPRR. The span at 108 to 123 shows a compositional bias: low complexity; it reads SSSSNTSSGTATSGES. Residues 126 to 141 show a composition bias toward basic and acidic residues; sequence ADWRDSSSASDDDRIP.

This is an uncharacterized protein from Aotus trivirgatus (Three-striped night monkey).